The chain runs to 96 residues: Large ribosomal subunit protein bL27 (96 aa).

Positions M1 to F9 are excised as a propeptide. Residues K13–D35 are disordered.

Belongs to the bacterial ribosomal protein bL27 family. Post-translationally, the N-terminus is cleaved by ribosomal processing cysteine protease Prp.

The chain is Large ribosomal subunit protein bL27 from Bacillus cereus (strain B4264).